Reading from the N-terminus, the 420-residue chain is Pyruvate dehydrogenase E1 component subunit alpha, mitochondrial (420 aa).

The N-terminal 33 residues, 1 to 33 (MLAASFKRQPSQLVRGLGAVLRTPTRIGHVRTM), are a transit peptide targeting the mitochondrion. Residues His112, Tyr138, Arg139, Ala177, Gly185, Val187, Asp216, Gly217, Ala218, Asn245, and Tyr247 each contribute to the pyruvate site. Residues Tyr138 and Arg139 each coordinate thiamine diphosphate. Residues Gly185, Val187, Asp216, Gly217, Ala218, and Asn245 each coordinate thiamine diphosphate. Residue Asp216 participates in Mg(2+) binding. The Mg(2+) site is built by Asn245 and Tyr247. His312 contributes to the thiamine diphosphate binding site. The residue at position 313 (Ser313) is a Phosphoserine; by PDK1 and PDK2.

As to quaternary structure, pyruvate dehydrogenase (E1) is a tetramer of 2 alpha and 2 beta subunits. Eukaryotic pyruvate dehydrogenase (PDH) complexes are organized as a core consisting of the oligomeric dihydrolipoamide acetyl-transferase (E2), around which are arranged multiple copies of pyruvate dehydrogenase (E1), dihydrolipoamide dehydrogenase (E3) and protein X (E3BP) bound by non-covalent bonds. It depends on thiamine diphosphate as a cofactor. The cofactor is Mg(2+). Phosphorylated at Ser-313 by pyruvate dehydrogenase kinases PKP1 (PDK1) and PKP2 (PDK2), and dephosphorylated by pyruvate dehydrogenase phosphatases PTC5 and PTC6.

The protein localises to the mitochondrion matrix. The enzyme catalyses N(6)-[(R)-lipoyl]-L-lysyl-[protein] + pyruvate + H(+) = N(6)-[(R)-S(8)-acetyldihydrolipoyl]-L-lysyl-[protein] + CO2. Its activity is regulated as follows. E1 activity is regulated by phosphorylation (inactivation) and dephosphorylation (activation) of the alpha subunit. In terms of biological role, the pyruvate dehydrogenase complex catalyzes the overall conversion of pyruvate to acetyl-CoA and CO(2). The chain is Pyruvate dehydrogenase E1 component subunit alpha, mitochondrial (PDA1) from Saccharomyces cerevisiae (strain ATCC 204508 / S288c) (Baker's yeast).